We begin with the raw amino-acid sequence, 663 residues long: UvrABC system protein B (663 aa).

Positions 26–414 constitute a Helicase ATP-binding domain; sequence DGLESGLAKQ…DNVAEQVVRP (389 aa). Position 39-46 (39-46) interacts with ATP; that stretch reads GVTGSGKT. Positions 92 to 115 match the Beta-hairpin motif; the sequence is YYDYYQPEAYVPASDTFIEKDASI. A Helicase C-terminal domain is found at 430–596; it reads QVDDLMSEIR…GINKSVEDIL (167 aa). One can recognise a UVR domain in the interval 624 to 659; sequence AKEINALEKQMYAHAQNMEFELAAKIRDEYLLLKEQ.

It belongs to the UvrB family. Forms a heterotetramer with UvrA during the search for lesions. Interacts with UvrC in an incision complex.

The protein resides in the cytoplasm. Its function is as follows. The UvrABC repair system catalyzes the recognition and processing of DNA lesions. A damage recognition complex composed of 2 UvrA and 2 UvrB subunits scans DNA for abnormalities. Upon binding of the UvrA(2)B(2) complex to a putative damaged site, the DNA wraps around one UvrB monomer. DNA wrap is dependent on ATP binding by UvrB and probably causes local melting of the DNA helix, facilitating insertion of UvrB beta-hairpin between the DNA strands. Then UvrB probes one DNA strand for the presence of a lesion. If a lesion is found the UvrA subunits dissociate and the UvrB-DNA preincision complex is formed. This complex is subsequently bound by UvrC and the second UvrB is released. If no lesion is found, the DNA wraps around the other UvrB subunit that will check the other stand for damage. The polypeptide is UvrABC system protein B (Legionella pneumophila (strain Paris)).